The following is a 759-amino-acid chain: Holliday junction resolvase YEN1 (759 aa).

Disordered regions lie at residues 62–83 (RSRSRSPTRSPRDSDIDSSQEY), 498–518 (SQSPLKRSNSPSRSKSPTRRQ), and 683–702 (KSRTTNAEKNPPESGLKSRS). A compositionally biased stretch (low complexity) spans 500–512 (SPLKRSNSPSRSK). Serine 730 and serine 731 each carry phosphoserine.

The protein belongs to the XPG/RAD2 endonuclease family. GEN subfamily.

Its subcellular location is the cytoplasm. It localises to the nucleus. Endonuclease which resolves Holliday junctions by the introduction of symmetrically related cuts across the junction point, to produce nicked duplex products in which the nicks can be readily ligated. Four-way DNA intermediates, also known as Holliday junctions, are formed during homologous recombination and DNA repair, and their resolution is necessary for proper chromosome segregation. Involved in DNA-damage repair in vegetative cells. This chain is Holliday junction resolvase YEN1 (YEN1), found in Saccharomyces cerevisiae (strain ATCC 204508 / S288c) (Baker's yeast).